Consider the following 607-residue polypeptide: Glutamine--fructose-6-phosphate aminotransferase [isomerizing] (607 aa).

The active-site Nucleophile; for GATase activity is C2. A Glutamine amidotransferase type-2 domain is found at 2–218 (CGIIGYSGSK…DGDVVLVTKD (217 aa)). 2 SIS domains span residues 280–424 (FDEQ…KLGK) and 457–597 (IAKK…VDKP). K602 (for Fru-6P isomerization activity) is an active-site residue.

In terms of assembly, homodimer.

The protein resides in the cytoplasm. The enzyme catalyses D-fructose 6-phosphate + L-glutamine = D-glucosamine 6-phosphate + L-glutamate. Catalyzes the first step in hexosamine metabolism, converting fructose-6P into glucosamine-6P using glutamine as a nitrogen source. This Fusobacterium nucleatum subsp. nucleatum (strain ATCC 25586 / DSM 15643 / BCRC 10681 / CIP 101130 / JCM 8532 / KCTC 2640 / LMG 13131 / VPI 4355) protein is Glutamine--fructose-6-phosphate aminotransferase [isomerizing].